The following is a 378-amino-acid chain: Probable 3-hydroxyisobutyryl-CoA hydrolase 3 (378 aa).

Substrate-binding residues include glutamate 138 and aspartate 146.

This sequence belongs to the enoyl-CoA hydratase/isomerase family.

It is found in the peroxisome. The catalysed reaction is 3-hydroxy-2-methylpropanoyl-CoA + H2O = 3-hydroxy-2-methylpropanoate + CoA + H(+). It functions in the pathway amino-acid degradation; L-valine degradation. Its function is as follows. Involved in valine catabolism. The protein is Probable 3-hydroxyisobutyryl-CoA hydrolase 3 of Arabidopsis thaliana (Mouse-ear cress).